Consider the following 706-residue polypeptide: Elongation factor G (706 aa).

Residues 15–291 (LKTRNIGISA…GVLDYLASPV (277 aa)) enclose the tr-type G domain. GTP-binding positions include 24–31 (AHIDSGKT), 91–95 (DTPGH), and 145–148 (NKLD).

It belongs to the TRAFAC class translation factor GTPase superfamily. Classic translation factor GTPase family. EF-G/EF-2 subfamily.

The protein localises to the cytoplasm. In terms of biological role, catalyzes the GTP-dependent ribosomal translocation step during translation elongation. During this step, the ribosome changes from the pre-translocational (PRE) to the post-translocational (POST) state as the newly formed A-site-bound peptidyl-tRNA and P-site-bound deacylated tRNA move to the P and E sites, respectively. Catalyzes the coordinated movement of the two tRNA molecules, the mRNA and conformational changes in the ribosome. The protein is Elongation factor G of Leptospira interrogans serogroup Icterohaemorrhagiae serovar copenhageni (strain Fiocruz L1-130).